Consider the following 219-residue polypeptide: 2-phospho-L-lactate guanylyltransferase (219 aa).

The protein belongs to the CofC family. Homodimer.

The catalysed reaction is (2S)-2-phospholactate + GTP + H(+) = (2S)-lactyl-2-diphospho-5'-guanosine + diphosphate. It functions in the pathway cofactor biosynthesis; coenzyme F420 biosynthesis. In terms of biological role, guanylyltransferase that catalyzes the activation of (2S)-2-phospholactate (2-PL) as (2S)-lactyl-2-diphospho-5'-guanosine, via the condensation of 2-PL with GTP. It is involved in the biosynthesis of coenzyme F420, a hydride carrier cofactor. This chain is 2-phospho-L-lactate guanylyltransferase, found in Methanocaldococcus vulcanius (strain ATCC 700851 / DSM 12094 / M7) (Methanococcus vulcanius).